A 177-amino-acid polypeptide reads, in one-letter code: ATP synthase subunit delta (177 aa).

This sequence belongs to the ATPase delta chain family. F-type ATPases have 2 components, F(1) - the catalytic core - and F(0) - the membrane proton channel. F(1) has five subunits: alpha(3), beta(3), gamma(1), delta(1), epsilon(1). F(0) has three main subunits: a(1), b(2) and c(10-14). The alpha and beta chains form an alternating ring which encloses part of the gamma chain. F(1) is attached to F(0) by a central stalk formed by the gamma and epsilon chains, while a peripheral stalk is formed by the delta and b chains.

It is found in the cell inner membrane. Its function is as follows. F(1)F(0) ATP synthase produces ATP from ADP in the presence of a proton or sodium gradient. F-type ATPases consist of two structural domains, F(1) containing the extramembraneous catalytic core and F(0) containing the membrane proton channel, linked together by a central stalk and a peripheral stalk. During catalysis, ATP synthesis in the catalytic domain of F(1) is coupled via a rotary mechanism of the central stalk subunits to proton translocation. In terms of biological role, this protein is part of the stalk that links CF(0) to CF(1). It either transmits conformational changes from CF(0) to CF(1) or is implicated in proton conduction. This Shewanella putrefaciens (strain CN-32 / ATCC BAA-453) protein is ATP synthase subunit delta.